The primary structure comprises 485 residues: Probable high-affinity nitrate transporter 2.4 (485 aa).

12 helical membrane passes run 56–76, 80–100, 119–139, 147–167, 177–197, 215–235, 270–290, 305–327, 341–361, 377–397, 405–425, and 435–455; these read WMSL…LPAM, LVLA…ATLV, GVAS…ASSP, FVAG…SRIF, AVAA…MPVA, VTYL…LAFP, AWLL…MENV, AAGA…GGVA, LWAL…VGRM, VACA…VPFV, VSGM…RLFF, and AISC…LIHF.

Belongs to the major facilitator superfamily. Nitrate/nitrite porter (TC 2.A.1.8) family. In terms of tissue distribution, expressed in the base of the lateral root primordia, root-shoot junction zone, leaves, ends of the husk and vascular tissue of the anthers.

The protein localises to the cell membrane. Its function is as follows. Involved in nitrate transport. The chain is Probable high-affinity nitrate transporter 2.4 (NRT2.4) from Oryza sativa subsp. japonica (Rice).